A 329-amino-acid chain; its full sequence is tRNA uridine(34) hydroxylase (329 aa).

Residues Ser123 to Ser217 enclose the Rhodanese domain. Cys177 serves as the catalytic Cysteine persulfide intermediate. Positions Leu310–Asn329 are disordered. The span at Gln317–Asn329 shows a compositional bias: basic and acidic residues.

The protein belongs to the TrhO family.

It catalyses the reaction uridine(34) in tRNA + AH2 + O2 = 5-hydroxyuridine(34) in tRNA + A + H2O. In terms of biological role, catalyzes oxygen-dependent 5-hydroxyuridine (ho5U) modification at position 34 in tRNAs. The protein is tRNA uridine(34) hydroxylase of Francisella tularensis subsp. novicida (strain U112).